Reading from the N-terminus, the 312-residue chain is Small kinetochore-associated protein (312 aa).

Residues Met1 to Phe13 are compositionally biased toward basic and acidic residues. Disordered regions lie at residues Met1–Arg32, Leu55–Asn176, and Lys221–Asp242. Residues Arg75 to Thr84 are compositionally biased toward polar residues. 2 stretches are compositionally biased toward basic and acidic residues: residues Asp131–Gly143 and Gln166–Asn176. The interval Ile156–Met312 is interaction with SPAG5. The stretch at Glu169–Phe210 forms a coiled coil. Residues Leu246–Gln288 are a coiled coil.

In terms of assembly, part of an astrin (SPAG5)-kinastrin (SKAP) complex containing KNSTRN, SPAG5, PLK1, DYNLL1 and SGO2. Interacts with SPAG5. Directly binds to microtubules, although at relatively low affinity. Interacts with CENPE; this interaction greatly favors microtubule-binding. Interacts with DSN1/MIS13; leading to localization to kinetochores. Interacts with MAPRE1/EB1; leading to localization to the microtubule plus ends. Interacts with PRPF19. Interacts with DYNLL1. Interacts with MAP4.

Its subcellular location is the nucleus. The protein resides in the chromosome. It localises to the centromere. It is found in the kinetochore. The protein localises to the cytoplasm. Its subcellular location is the cytoskeleton. The protein resides in the spindle pole. It localises to the microtubule organizing center. Its function is as follows. Essential component of the mitotic spindle required for faithful chromosome segregation and progression into anaphase. Promotes the metaphase-to-anaphase transition and is required for chromosome alignment, normal timing of sister chromatid segregation, and maintenance of spindle pole architecture. The astrin (SPAG5)-kinastrin (SKAP) complex promotes stable microtubule-kinetochore attachments. Required for kinetochore oscillations and dynamics of microtubule plus-ends during live cell mitosis, possibly by forming a link between spindle microtubule plus-ends and mitotic chromosomes to achieve faithful cell division. The polypeptide is Small kinetochore-associated protein (Knstrn) (Rattus norvegicus (Rat)).